A 782-amino-acid chain; its full sequence is E3 UFM1-protein ligase 1 homolog (782 aa).

Positions 405–478 (VSTQELEDDG…TRGGGGASKK (74 aa)) are disordered.

The protein belongs to the UFL1 family.

Its function is as follows. E3 UFM1-protein ligase that mediates ufmylation of target proteins. The chain is E3 UFM1-protein ligase 1 homolog from Drosophila sechellia (Fruit fly).